The primary structure comprises 159 residues: Protein-export protein SecB (159 aa).

Belongs to the SecB family. Homotetramer, a dimer of dimers. One homotetramer interacts with 1 SecA dimer.

It localises to the cytoplasm. Functionally, one of the proteins required for the normal export of preproteins out of the cell cytoplasm. It is a molecular chaperone that binds to a subset of precursor proteins, maintaining them in a translocation-competent state. It also specifically binds to its receptor SecA. The polypeptide is Protein-export protein SecB (Hahella chejuensis (strain KCTC 2396)).